A 327-amino-acid chain; its full sequence is Immediate early response gene 5 protein (327 aa).

Disordered regions lie at residues 59 to 166 (GPAG…GVFP) and 227 to 313 (GPAG…DKPV). Residues 71–84 (QPGEPAAGPPAGWG) show a composition bias toward low complexity. Positions 253–262 (GEDDDAEEME) are enriched in acidic residues. Residues 265–278 (NVANLISIFGSSFS) are compositionally biased toward polar residues.

The protein belongs to the IER family. As to quaternary structure, monomer. Homodimer. Associates with the catalytic subunit of protein phosphatase PP2A. Interacts (via N- and C-terminal regions) with PPP2R2B. Interacts with PPP2R2A, PPP2R2C and PPP2R2D. Interacts (via N-terminus) with RPS6KB1. Interacts (via central region) with HSF1; this interaction promotes PPP2CA-induced HSF1 dephosphorylation, leading to enhanced HSF1 transcriptional activity. In terms of tissue distribution, expressed in acute myeloid leukemia (AML) cells.

It is found in the nucleus. Its subcellular location is the cytoplasm. Its function is as follows. Plays a role as a transcription factor. Mediates positive transcriptional regulation of several chaperone genes during the heat shock response in a HSF1-dependent manner. Mediates negative transcriptional regulation of CDC25B expression. Plays a role in the dephosphorylation of the heat shock factor HSF1 and ribosomal protein S6 kinase (S6K) by the protein phosphatase PP2A. Involved in the regulation of cell proliferation and resistance to thermal stress. Involved in the cell cycle checkpoint and survival in response to ionizing radiation. Associates with chromatin to the CDC25B promoter. The sequence is that of Immediate early response gene 5 protein (IER5) from Homo sapiens (Human).